Here is a 359-residue protein sequence, read N- to C-terminus: Quinolinate synthase (359 aa).

Iminosuccinate contacts are provided by H81 and S99. Residue C144 coordinates [4Fe-4S] cluster. Residues 170-172 and S187 contribute to the iminosuccinate site; that span reads YVN. C229 is a binding site for [4Fe-4S] cluster. Residues 255–257 and T272 each bind iminosuccinate; that span reads HPE. Position 315 (C315) interacts with [4Fe-4S] cluster.

Belongs to the quinolinate synthase family. Type 2 subfamily. [4Fe-4S] cluster is required as a cofactor.

It is found in the cytoplasm. It carries out the reaction iminosuccinate + dihydroxyacetone phosphate = quinolinate + phosphate + 2 H2O + H(+). The protein operates within cofactor biosynthesis; NAD(+) biosynthesis; quinolinate from iminoaspartate: step 1/1. Its function is as follows. Catalyzes the condensation of iminoaspartate with dihydroxyacetone phosphate to form quinolinate. This is Quinolinate synthase from Sinorhizobium fredii (strain NBRC 101917 / NGR234).